Here is a 404-residue protein sequence, read N- to C-terminus: DNA gyrase subunit B (404 aa).

The region spanning 321–404 (SEIYIVEGDS…VIIMTDADVD (84 aa)) is the Toprim domain. Positions 327, 400, and 402 each coordinate Mg(2+).

The protein belongs to the type II topoisomerase GyrB family. Heterotetramer, composed of two GyrA and two GyrB chains. In the heterotetramer, GyrA contains the active site tyrosine that forms a transient covalent intermediate with DNA, while GyrB binds cofactors and catalyzes ATP hydrolysis. Mg(2+) is required as a cofactor. It depends on Mn(2+) as a cofactor. Ca(2+) serves as cofactor.

Its subcellular location is the cytoplasm. The catalysed reaction is ATP-dependent breakage, passage and rejoining of double-stranded DNA.. A type II topoisomerase that negatively supercoils closed circular double-stranded (ds) DNA in an ATP-dependent manner to modulate DNA topology and maintain chromosomes in an underwound state. Negative supercoiling favors strand separation, and DNA replication, transcription, recombination and repair, all of which involve strand separation. Also able to catalyze the interconversion of other topological isomers of dsDNA rings, including catenanes and knotted rings. Type II topoisomerases break and join 2 DNA strands simultaneously in an ATP-dependent manner. The protein is DNA gyrase subunit B (gyrB) of Bacillus cereus.